The chain runs to 343 residues: MVIQTNLSYRFFILIVFLFTLANPKSDSDLKNELVSLRSTAESGVISFNNDDVSKFITSVSTPRPYSLIIFFDAVHLHGNSQLRLPEFRREFRLVSATFITNNNNESNGTKLFFCEIESTHSEASFRRFAVESLPHISLVSPTTENLTESDQMDGGDFTGLAESMAEFVERQTKLTVCSIQRPPLISKTQIGIIVAIIIISTPILIKKILKGETLLHDHRIWLVGAVFVYFFSVSGTMHNIIREMPMYIKDYEDSSKFVFFIEESEMQLGAEGFFVGFLYTVVGLLLAFVTNVVVRVKKLDEQRMAMLLALSISFWAVRKVVYLDNWKTGYEIYPYWPSSWRG.

A signal peptide spans 1–22; that stretch reads MVIQTNLSYRFFILIVFLFTLA. Residues 23-185 are Lumenal-facing; it reads NPKSDSDLKN…TVCSIQRPPL (163 aa). N-linked (GlcNAc...) asparagine glycosylation is found at N105, N108, and N146. The chain crosses the membrane as a helical span at residues 186–206; that stretch reads ISKTQIGIIVAIIIISTPILI. Topologically, residues 207 to 220 are cytoplasmic; the sequence is KKILKGETLLHDHR. A helical membrane pass occupies residues 221 to 241; it reads IWLVGAVFVYFFSVSGTMHNI. Topologically, residues 242–273 are lumenal; sequence IREMPMYIKDYEDSSKFVFFIEESEMQLGAEG. The helical transmembrane segment at 274 to 294 threads the bilayer; sequence FFVGFLYTVVGLLLAFVTNVV. Residues 295–304 are Cytoplasmic-facing; it reads VRVKKLDEQR. Residues 305 to 325 form a helical membrane-spanning segment; it reads MAMLLALSISFWAVRKVVYLD. Over 326–343 the chain is Lumenal; the sequence is NWKTGYEIYPYWPSSWRG.

It belongs to the OST3/OST6 family. In terms of assembly, component of the oligosaccharyltransferase (OST) complex.

Its subcellular location is the endoplasmic reticulum membrane. In terms of biological role, subunit of the oligosaccharyl transferase (OST) complex that catalyzes the initial transfer of a defined glycan (Glc(3)Man(9)GlcNAc(2) in eukaryotes) from the lipid carrier dolichol-pyrophosphate to an asparagine residue within an Asn-X-Ser/Thr consensus motif in nascent polypeptide chains, the first step in protein N-glycosylation. N-glycosylation occurs cotranslationally and the complex associates with the Sec61 complex at the channel-forming translocon complex that mediates protein translocation across the endoplasmic reticulum (ER). All subunits are required for a maximal enzyme activity. The protein is Probable dolichyl-diphosphooligosaccharide--protein glycosyltransferase subunit 3A (OST3A) of Arabidopsis thaliana (Mouse-ear cress).